Reading from the N-terminus, the 82-residue chain is MPQKQKVNVKIGDSVTVISGFHKNETGEVLKINRKNGKIIVKGINFKFKHVKPTTENEIGEIKQFEAPLHHSNVKLNLKKVL.

This sequence belongs to the universal ribosomal protein uL24 family. In terms of assembly, part of the 50S ribosomal subunit.

It localises to the plastid. The protein resides in the chloroplast. One of two assembly initiator proteins, it binds directly to the 5'-end of the 23S rRNA, where it nucleates assembly of the 50S subunit. The protein is Large ribosomal subunit protein uL24c (rpl24) of Phaeodactylum tricornutum (strain CCAP 1055/1).